We begin with the raw amino-acid sequence, 247 residues long: Protein-L-isoaspartate O-methyltransferase 2 (247 aa).

The active site involves S97.

It belongs to the methyltransferase superfamily. L-isoaspartyl/D-aspartyl protein methyltransferase family.

The protein resides in the cytoplasm. It catalyses the reaction [protein]-L-isoaspartate + S-adenosyl-L-methionine = [protein]-L-isoaspartate alpha-methyl ester + S-adenosyl-L-homocysteine. Functionally, catalyzes the methyl esterification of L-isoaspartyl residues in peptides and proteins that result from spontaneous decomposition of normal L-aspartyl and L-asparaginyl residues. It plays a role in the repair and/or degradation of damaged proteins. The protein is Protein-L-isoaspartate O-methyltransferase 2 of Syntrophobacter fumaroxidans (strain DSM 10017 / MPOB).